We begin with the raw amino-acid sequence, 383 residues long: Acetylornithine deacetylase (383 aa).

Position 80 (histidine 80) interacts with Zn(2+). The active site involves aspartate 82. Position 112 (aspartate 112) interacts with Zn(2+). Residue glutamate 144 is part of the active site. Positions 145, 169, and 355 each coordinate Zn(2+).

This sequence belongs to the peptidase M20A family. ArgE subfamily. As to quaternary structure, homodimer. It depends on Zn(2+) as a cofactor. Co(2+) is required as a cofactor. Glutathione serves as cofactor.

Its subcellular location is the cytoplasm. It catalyses the reaction N(2)-acetyl-L-ornithine + H2O = L-ornithine + acetate. Its pathway is amino-acid biosynthesis; L-arginine biosynthesis; L-ornithine from N(2)-acetyl-L-ornithine (linear): step 1/1. In terms of biological role, catalyzes the hydrolysis of the amide bond of N(2)-acetylated L-amino acids. Cleaves the acetyl group from N-acetyl-L-ornithine to form L-ornithine, an intermediate in L-arginine biosynthesis pathway, and a branchpoint in the synthesis of polyamines. This Salmonella typhi protein is Acetylornithine deacetylase.